The sequence spans 101 residues: UPF0235 protein Cphamn1_2066 (101 aa).

It belongs to the UPF0235 family.

This Chlorobium phaeobacteroides (strain BS1) protein is UPF0235 protein Cphamn1_2066.